Reading from the N-terminus, the 146-residue chain is MHISEKGLVLIKRYEGLRLKAYQCRAGRWTLGYGHTHNLNIGDVITQEQAEAFLREDIAQVTALLNTQIKVPLTQNQYDAICSLVFNIGMTAFTTSTLLKKLNVGDYSGASAEFMKWSKAKVNGKRTPLPGLIKRRQAEKALFESA.

Residues Glu-15 and Cys-24 each act as proton donor/acceptor in the active site.

Belongs to the glycosyl hydrolase 24 family.

The protein localises to the host cytoplasm. The catalysed reaction is Hydrolysis of (1-&gt;4)-beta-linkages between N-acetylmuramic acid and N-acetyl-D-glucosamine residues in a peptidoglycan and between N-acetyl-D-glucosamine residues in chitodextrins.. Its function is as follows. Endolysin with lysozyme activity that degrades host peptidoglycans and participates with the holin and spanin proteins in the sequential events which lead to the programmed host cell lysis releasing the mature viral particles. Once the holin has permeabilized the host cell membrane, the endolysin can reach the periplasm and break down the peptidoglycan layer. This is Endolysin (13) from Acyrthosiphon pisum secondary endosymbiont phage 1 (Bacteriophage APSE-1).